An 85-amino-acid chain; its full sequence is Phosphoribosyl-AMP cyclohydrolase (85 aa).

Aspartate 48 provides a ligand contact to Mg(2+). Residue cysteine 49 coordinates Zn(2+). Positions 50 and 52 each coordinate Mg(2+). Zn(2+) contacts are provided by cysteine 65 and cysteine 72.

Belongs to the PRA-CH family. In terms of assembly, homodimer. It depends on Mg(2+) as a cofactor. The cofactor is Zn(2+).

The protein localises to the cytoplasm. It catalyses the reaction 1-(5-phospho-beta-D-ribosyl)-5'-AMP + H2O = 1-(5-phospho-beta-D-ribosyl)-5-[(5-phospho-beta-D-ribosylamino)methylideneamino]imidazole-4-carboxamide. The protein operates within amino-acid biosynthesis; L-histidine biosynthesis; L-histidine from 5-phospho-alpha-D-ribose 1-diphosphate: step 3/9. Catalyzes the hydrolysis of the adenine ring of phosphoribosyl-AMP. In Saccharolobus solfataricus (strain ATCC 35092 / DSM 1617 / JCM 11322 / P2) (Sulfolobus solfataricus), this protein is Phosphoribosyl-AMP cyclohydrolase (hisI).